The chain runs to 209 residues: Thiamine-phosphate synthase (209 aa).

4-amino-2-methyl-5-(diphosphooxymethyl)pyrimidine-binding positions include 41–45 and asparagine 73; that span reads QLREK. Aspartate 74 and aspartate 93 together coordinate Mg(2+). Serine 112 is a 4-amino-2-methyl-5-(diphosphooxymethyl)pyrimidine binding site. 2-[(2R,5Z)-2-carboxy-4-methylthiazol-5(2H)-ylidene]ethyl phosphate is bound at residue 138–140; it reads TGT. Lysine 141 contacts 4-amino-2-methyl-5-(diphosphooxymethyl)pyrimidine. Residues glycine 168 and 188–189 contribute to the 2-[(2R,5Z)-2-carboxy-4-methylthiazol-5(2H)-ylidene]ethyl phosphate site; that span reads VS.

This sequence belongs to the thiamine-phosphate synthase family. It depends on Mg(2+) as a cofactor.

The enzyme catalyses 2-[(2R,5Z)-2-carboxy-4-methylthiazol-5(2H)-ylidene]ethyl phosphate + 4-amino-2-methyl-5-(diphosphooxymethyl)pyrimidine + 2 H(+) = thiamine phosphate + CO2 + diphosphate. It carries out the reaction 2-(2-carboxy-4-methylthiazol-5-yl)ethyl phosphate + 4-amino-2-methyl-5-(diphosphooxymethyl)pyrimidine + 2 H(+) = thiamine phosphate + CO2 + diphosphate. It catalyses the reaction 4-methyl-5-(2-phosphooxyethyl)-thiazole + 4-amino-2-methyl-5-(diphosphooxymethyl)pyrimidine + H(+) = thiamine phosphate + diphosphate. It participates in cofactor biosynthesis; thiamine diphosphate biosynthesis; thiamine phosphate from 4-amino-2-methyl-5-diphosphomethylpyrimidine and 4-methyl-5-(2-phosphoethyl)-thiazole: step 1/1. In terms of biological role, condenses 4-methyl-5-(beta-hydroxyethyl)thiazole monophosphate (THZ-P) and 2-methyl-4-amino-5-hydroxymethyl pyrimidine pyrophosphate (HMP-PP) to form thiamine monophosphate (TMP). The protein is Thiamine-phosphate synthase of Alkaliphilus oremlandii (strain OhILAs) (Clostridium oremlandii (strain OhILAs)).